The chain runs to 485 residues: Cysteine--tRNA ligase (485 aa).

Cys-29 contributes to the Zn(2+) binding site. The short motif at 31–41 (VTVYDHCHIGH) is the 'HIGH' region element. Residues Cys-209, His-234, and Glu-238 each coordinate Zn(2+). Positions 266 to 270 (KMSKS) match the 'KMSKS' region motif. Lys-269 serves as a coordination point for ATP.

The protein belongs to the class-I aminoacyl-tRNA synthetase family. As to quaternary structure, monomer. Zn(2+) is required as a cofactor.

The protein resides in the cytoplasm. It carries out the reaction tRNA(Cys) + L-cysteine + ATP = L-cysteinyl-tRNA(Cys) + AMP + diphosphate. This Geobacter metallireducens (strain ATCC 53774 / DSM 7210 / GS-15) protein is Cysteine--tRNA ligase.